Consider the following 430-residue polypeptide: Enolase (430 aa).

Gln164 provides a ligand contact to (2R)-2-phosphoglycerate. Glu206 functions as the Proton donor in the catalytic mechanism. Mg(2+) is bound by residues Asp243, Glu288, and Asp315. (2R)-2-phosphoglycerate contacts are provided by Lys340, Arg369, Ser370, and Lys391. Lys340 functions as the Proton acceptor in the catalytic mechanism.

The protein belongs to the enolase family. Mg(2+) is required as a cofactor.

The protein resides in the cytoplasm. It localises to the secreted. The protein localises to the cell surface. It catalyses the reaction (2R)-2-phosphoglycerate = phosphoenolpyruvate + H2O. The protein operates within carbohydrate degradation; glycolysis; pyruvate from D-glyceraldehyde 3-phosphate: step 4/5. In terms of biological role, catalyzes the reversible conversion of 2-phosphoglycerate (2-PG) into phosphoenolpyruvate (PEP). It is essential for the degradation of carbohydrates via glycolysis. The chain is Enolase from Lysinibacillus sphaericus (strain C3-41).